A 458-amino-acid polypeptide reads, in one-letter code: ATP synthase subunit beta (458 aa).

148–155 lines the ATP pocket; sequence GGAGVGKT.

Belongs to the ATPase alpha/beta chains family. F-type ATPases have 2 components, CF(1) - the catalytic core - and CF(0) - the membrane proton channel. CF(1) has five subunits: alpha(3), beta(3), gamma(1), delta(1), epsilon(1). CF(0) has three main subunits: a(1), b(2) and c(9-12). The alpha and beta chains form an alternating ring which encloses part of the gamma chain. CF(1) is attached to CF(0) by a central stalk formed by the gamma and epsilon chains, while a peripheral stalk is formed by the delta and b chains.

It is found in the cell inner membrane. It catalyses the reaction ATP + H2O + 4 H(+)(in) = ADP + phosphate + 5 H(+)(out). Its function is as follows. Produces ATP from ADP in the presence of a proton gradient across the membrane. The catalytic sites are hosted primarily by the beta subunits. This is ATP synthase subunit beta from Pseudomonas fluorescens (strain ATCC BAA-477 / NRRL B-23932 / Pf-5).